The primary structure comprises 192 residues: Cytochrome b-245 light chain (192 aa).

At glycine 2–alanine 7 the chain is on the cytoplasmic side. The chain crosses the membrane as a helical span at residues methionine 8 to alanine 30. At glycine 31–glutamine 35 the chain is on the extracellular side. A helical transmembrane segment spans residues tryptophan 36 to glutamate 53. The Cytoplasmic portion of the chain corresponds to tyrosine 54–glycine 69. The stretch at glutamine 70–phenylalanine 80 is an intramembrane region. The Cytoplasmic segment spans residues glycine 81 to asparagine 86. The helical transmembrane segment at tyrosine 87 to leucine 104 threads the bilayer. A topological domain (extracellular) is located at residue leucine 105. A helical transmembrane segment spans residues alanine 106–isoleucine 126. Topologically, residues arginine 127–valine 192 are cytoplasmic. Positions isoleucine 134–valine 192 are disordered. Threonine 147 bears the Phosphothreonine mark. Lysine 149 participates in a covalent cross-link: Glycyl lysine isopeptide (Lys-Gly) (interchain with G-Cter in ubiquitin). A phosphoserine mark is found at serine 168 and serine 176.

This sequence belongs to the p22phox family. In terms of assembly, component of the phagocyte NADPH oxidase core complex/cytochrome b558 complex, composed of CYBB (heavy chain (beta)) and CYBA (light chain (alpha)). Component of the phagocyte NADPH oxidase complex composed of an obligatory core heterodimer formed by the membrane proteins CYBA and CYBB and the cytosolic regulatory subunits NCF1/p47-phox, NCF2/p67-phox, NCF4/p40-phox and the small GTPase RAC1 or RAC2. Interacts with NCF1 (via SH3 domain). Interacts with SH3PXD2A. Interacts with DUOX1, DUOX2 and TPO. Interacts with NOX4; this interaction mediates superoxide generation. Interacts with calprotectin (S100A8/9). Interacts with GBP7. Interacts with NOXO1. Forms a heterodimer with NOX3 and is essential for activity and cell membrane localization of NOX3. Interacts with NOX1. Post-translationally, phosphorylation at Thr-147 enhances NADPH oxidase activity by promoting NCF1/p47-phox binding. Ubiquitinated at Lys-149 likely by RNF145. As to expression, expressed to a relatively high level in kidney, spleen, thymus and lung, and to a lower level in aorta, adrenals, and heart. Expression is not detected in liver or brain.

It is found in the cell membrane. Functionally, subunit of NADPH oxidase complexes that is required for the NADPH oxidase activity that generates, in various cell types, superoxide from molecular oxygen utilizing NADPH as an electron donor. Subunit of the phagocyte NADPH oxidase complex that mediates the transfer of electrons from cytosolic NADPH to O2 to produce the superoxide anion (O2(-)). In the activated complex, electrons are first transferred from NADPH to flavin adenine dinucleotide (FAD) and subsequently transferred via two heme molecules to molecular oxygen, producing superoxide through an outer-sphere reaction. Activation of the NADPH oxidase complex is initiated by the assembly of cytosolic subunits of the NADPH oxidase complex with the core NADPH oxidase complex to form a complex at the plasma membrane or phagosomal membrane. This activation process is initiated by phosphorylation dependent binding of the cytosolic NCF1/p47-phox subunit to the C-terminus of CYBA/p22-phox. Aassociates with NOX3 to form a functional NADPH oxidase constitutively generating superoxide. The protein is Cytochrome b-245 light chain of Rattus norvegicus (Rat).